The chain runs to 141 residues: Hemoglobin subunit alpha (141 aa).

A Globin domain is found at 1–141 (VLSAADKGNV…VSTVLTSKYR (141 aa)). Ser3 carries the phosphoserine modification. An N6-succinyllysine mark is found at Lys7 and Lys11. At Lys16 the chain carries N6-acetyllysine; alternate. Lys16 carries the N6-succinyllysine; alternate modification. Tyr24 is modified (phosphotyrosine). Phosphoserine is present on Ser35. At Lys40 the chain carries N6-succinyllysine. His58 is an O2 binding site. His87 is a binding site for heme b. Ser102 carries the post-translational modification Phosphoserine. Thr108 bears the Phosphothreonine mark. 2 positions are modified to phosphoserine: Ser124 and Ser131. 2 positions are modified to phosphothreonine: Thr134 and Thr137. A Phosphoserine modification is found at Ser138.

It belongs to the globin family. As to quaternary structure, heterotetramer of two alpha chains and two beta chains. Red blood cells.

Involved in oxygen transport from the lung to the various peripheral tissues. Functionally, hemopressin acts as an antagonist peptide of the cannabinoid receptor CNR1. Hemopressin-binding efficiently blocks cannabinoid receptor CNR1 and subsequent signaling. This is Hemoglobin subunit alpha (HBA) from Macrotus californicus (Californian leaf-nosed bat).